Consider the following 784-residue polypeptide: MKKRIPTLLATMIATALYSQQGLAADLASQCMLGVPSYDRPLVQGDTNDLPVTINANHAKGDYPDDAVFTGSVDIMQGNSRLQADEVQLHQKEAPGQPEPVRTVDALGNVHYDDNQVILKGPKGWANLNTKDTNVWEGDYQMVGRQGRGKADLMKQRGENRYTILDNGSFTSCLPGSDTWSVVGSEIIHDREEQVAEIWNARFKVGPVSIFYSPYLQLPVGDKRRSGFLIPNAKYTTTNYFEFYLPYYWNIAPNMDATITPHYMHRRGNIMWENEFRYLSQAGAGLMELDYLPSDKVYEDEHPNDDSSRRWLFYWNHSGVMDQVWRFNVDYTKVSDPSYFNDFDNKYGSSTDGYATQKFSVGYAVQNFNATVSTKQFQVFSEQNTSSYSAEPQLDVNYYQNDVGPFDTRIYGQAVHFVNTRDDMPEATRVHLEPTINLPLSNNWGSINTEAKLLATHYQQTNLDWYNSRNTTKLDESVNRVMPQFKVDGKMVFERDMEMLAPGYTQTLEPRAQYLYVPYRDQSDIYNYDSSLLQSDYSGLFRDRTYGGLDRIASANQVTTGVTSRIYDDAAVERFNISVGQIYYFTESRTGDDNITWENDDKTGSLVWAGDTYWRISERWGLRGGIQYDTRLDNVATSNSSIEYRRDEDRLVQLNYRYASPEYIQATLPKYYSTAEQYKNGISQVGAVASWPIADRWSIVGAYYYDTNANKQADSMLGVQYSSCCYAIRVGYERKLNGWDNDKQHAVYDNAIGFNIELRGLSSNYGLGTQEMLRSNILPYQNTL.

A signal peptide spans 1 to 24; sequence MKKRIPTLLATMIATALYSQQGLA. Disulfide bonds link cysteine 31/cysteine 724 and cysteine 173/cysteine 725.

It belongs to the LptD family. Component of the lipopolysaccharide transport and assembly complex. Interacts with LptE and LptA. Post-translationally, contains two intramolecular disulfide bonds.

It is found in the cell outer membrane. Its function is as follows. Together with LptE, is involved in the assembly of lipopolysaccharide (LPS) at the surface of the outer membrane. This is LPS-assembly protein LptD from Escherichia coli O157:H7.